Reading from the N-terminus, the 515-residue chain is Hopanoid C-3 methylase (515 aa).

In terms of domain architecture, B12-binding spans 8–141; the sequence is PSPLMYTKVF…ETLARRGNID (134 aa). One can recognise a Radical SAM core domain in the interval 181 to 395; sequence GTLDPCASIE…DIQHAVLPTR (215 aa). Residues C195, C199, and C202 each coordinate [4Fe-4S] cluster.

The protein belongs to the radical SAM superfamily. [4Fe-4S] cluster is required as a cofactor.

Required for methylation of hopanoids at the C-3 position. This Methylococcus capsulatus (strain ATCC 33009 / NCIMB 11132 / Bath) protein is Hopanoid C-3 methylase.